We begin with the raw amino-acid sequence, 131 residues long: MPKRTSLQNMGEAGEACVRQYLEEQGWQILAQQWRCRWGELDLVASRAGELIFVEVKTRSGQGWDQKGLLAVGIQKQQRLIRAAQAFLSQHPDLAELACRFDVALVEQRPGKEGVSYALADYLQGAFELWE.

It belongs to the UPF0102 family.

The chain is UPF0102 protein CYA_0708 from Synechococcus sp. (strain JA-3-3Ab) (Cyanobacteria bacterium Yellowstone A-Prime).